Here is a 190-residue protein sequence, read N- to C-terminus: Threonylcarbamoyl-AMP synthase (190 aa).

Residues 9 to 190 (FLQLALARQT…IDIVTGQQFR (182 aa)) form the YrdC-like domain.

Belongs to the SUA5 family. TsaC subfamily.

The protein resides in the cytoplasm. The enzyme catalyses L-threonine + hydrogencarbonate + ATP = L-threonylcarbamoyladenylate + diphosphate + H2O. Its function is as follows. Required for the formation of a threonylcarbamoyl group on adenosine at position 37 (t(6)A37) in tRNAs that read codons beginning with adenine. Catalyzes the conversion of L-threonine, HCO(3)(-)/CO(2) and ATP to give threonylcarbamoyl-AMP (TC-AMP) as the acyladenylate intermediate, with the release of diphosphate. This is Threonylcarbamoyl-AMP synthase from Marinobacter nauticus (strain ATCC 700491 / DSM 11845 / VT8) (Marinobacter aquaeolei).